The following is a 164-amino-acid chain: 3-isopropylmalate dehydratase small subunit 1 (164 aa).

It belongs to the LeuD family. LeuD type 2 subfamily. Heterodimer of LeuC and LeuD.

The catalysed reaction is (2R,3S)-3-isopropylmalate = (2S)-2-isopropylmalate. Its pathway is amino-acid biosynthesis; L-leucine biosynthesis; L-leucine from 3-methyl-2-oxobutanoate: step 2/4. In terms of biological role, catalyzes the isomerization between 2-isopropylmalate and 3-isopropylmalate, via the formation of 2-isopropylmaleate. The chain is 3-isopropylmalate dehydratase small subunit 1 (leuD1) from Pyrococcus furiosus (strain ATCC 43587 / DSM 3638 / JCM 8422 / Vc1).